The primary structure comprises 319 residues: Ribonuclease Z (319 aa).

Zn(2+) is bound by residues His62, His64, Asp66, His67, His145, Asp216, and His274. Catalysis depends on Asp66, which acts as the Proton acceptor.

The protein belongs to the RNase Z family. As to quaternary structure, homodimer. It depends on Zn(2+) as a cofactor.

It carries out the reaction Endonucleolytic cleavage of RNA, removing extra 3' nucleotides from tRNA precursor, generating 3' termini of tRNAs. A 3'-hydroxy group is left at the tRNA terminus and a 5'-phosphoryl group is left at the trailer molecule.. In terms of biological role, zinc phosphodiesterase, which displays some tRNA 3'-processing endonuclease activity. Probably involved in tRNA maturation, by removing a 3'-trailer from precursor tRNA. The protein is Ribonuclease Z of Synechococcus sp. (strain CC9605).